We begin with the raw amino-acid sequence, 140 residues long: Large ribosomal subunit protein uL13 (140 aa).

Part of the 50S ribosomal subunit.

This protein is one of the early assembly proteins of the 50S ribosomal subunit, although it is not seen to bind rRNA by itself. It is important during the early stages of 50S assembly. The sequence is that of Large ribosomal subunit protein uL13 from Thermus thermophilus (strain ATCC 27634 / DSM 579 / HB8).